The chain runs to 153 residues: Protein SprT-like (153 aa).

The SprT-like domain occupies glutamine 7–serine 145. Histidine 67 contributes to the Zn(2+) binding site. Glutamate 68 is an active-site residue. Histidine 71 lines the Zn(2+) pocket.

This sequence belongs to the SprT family. The cofactor is Zn(2+).

The protein resides in the cytoplasm. The sequence is that of Protein SprT-like from Enterococcus faecalis (strain ATCC 700802 / V583).